The primary structure comprises 231 residues: Ribose-5-phosphate isomerase A (231 aa).

Residues Thr-32–Thr-35, Asp-85–Asp-88, and Lys-98–Gly-101 contribute to the substrate site. Catalysis depends on Glu-107, which acts as the Proton acceptor. A substrate-binding site is contributed by Lys-125.

The protein belongs to the ribose 5-phosphate isomerase family. In terms of assembly, homodimer.

The catalysed reaction is aldehydo-D-ribose 5-phosphate = D-ribulose 5-phosphate. It functions in the pathway carbohydrate degradation; pentose phosphate pathway; D-ribose 5-phosphate from D-ribulose 5-phosphate (non-oxidative stage): step 1/1. In terms of biological role, catalyzes the reversible conversion of ribose-5-phosphate to ribulose 5-phosphate. The chain is Ribose-5-phosphate isomerase A from Burkholderia cenocepacia (strain ATCC BAA-245 / DSM 16553 / LMG 16656 / NCTC 13227 / J2315 / CF5610) (Burkholderia cepacia (strain J2315)).